A 346-amino-acid polypeptide reads, in one-letter code: tRNA N6-adenosine threonylcarbamoyltransferase (346 aa).

Fe cation-binding residues include H117 and H121. Substrate-binding positions include 139 to 143 (QVSGG), D172, G185, D189, and N278. D308 contacts Fe cation.

This sequence belongs to the KAE1 / TsaD family. Fe(2+) serves as cofactor.

It localises to the cytoplasm. It catalyses the reaction L-threonylcarbamoyladenylate + adenosine(37) in tRNA = N(6)-L-threonylcarbamoyladenosine(37) in tRNA + AMP + H(+). Its function is as follows. Required for the formation of a threonylcarbamoyl group on adenosine at position 37 (t(6)A37) in tRNAs that read codons beginning with adenine. Is involved in the transfer of the threonylcarbamoyl moiety of threonylcarbamoyl-AMP (TC-AMP) to the N6 group of A37, together with TsaE and TsaB. TsaD likely plays a direct catalytic role in this reaction. The chain is tRNA N6-adenosine threonylcarbamoyltransferase from Lactobacillus delbrueckii subsp. bulgaricus (strain ATCC 11842 / DSM 20081 / BCRC 10696 / JCM 1002 / NBRC 13953 / NCIMB 11778 / NCTC 12712 / WDCM 00102 / Lb 14).